Here is a 395-residue protein sequence, read N- to C-terminus: Univin (395 aa).

The N-terminal stretch at 1–19 (MDVSKVLILTLIWLLTADS) is a signal peptide. Residues 20 to 272 (APPDYVTLTR…CSKRNRRNKR (253 aa)) constitute a propeptide that is removed on maturation. An N-linked (GlcNAc...) asparagine glycan is attached at Asn50. The tract at residues 69–97 (EGAAASRGGETEIGKEEEEDGRPCSETKL) is disordered. Asn116 and Asn336 each carry an N-linked (GlcNAc...) asparagine glycan. 3 cysteine pairs are disulfide-bonded: Cys294–Cys360, Cys323–Cys392, and Cys327–Cys394.

The protein belongs to the TGF-beta family. As to quaternary structure, homodimer; disulfide-linked.

Its subcellular location is the secreted. Could have a critical role in early developmental decisions in the sea urchin embryo. This Strongylocentrotus purpuratus (Purple sea urchin) protein is Univin.